We begin with the raw amino-acid sequence, 430 residues long: Serine hydroxymethyltransferase (430 aa).

Residue Gly-120–Ile-122 participates in (6S)-5,6,7,8-tetrahydrofolate binding. Lys-226 is modified (N6-(pyridoxal phosphate)lysine).

It belongs to the SHMT family. Homodimer. The cofactor is pyridoxal 5'-phosphate.

The protein localises to the cytoplasm. It functions in the pathway amino-acid biosynthesis; glycine biosynthesis; glycine from L-serine: step 1/1. In terms of biological role, catalyzes the reversible interconversion of serine and glycine with a modified folate serving as the one-carbon carrier. Also exhibits a pteridine-independent aldolase activity toward beta-hydroxyamino acids, producing glycine and aldehydes, via a retro-aldol mechanism. The sequence is that of Serine hydroxymethyltransferase from Pyrobaculum calidifontis (strain DSM 21063 / JCM 11548 / VA1).